The sequence spans 257 residues: Protein-tyrosine-phosphatase IBR5 (257 aa).

One can recognise a Tyrosine-protein phosphatase domain in the interval 49-185; that stretch reads FPSEILPEFL…LQEFEQGIFG (137 aa). Cys129 (phosphocysteine intermediate) is an active-site residue. Residues 235–257 are disordered; it reads QEFTFGATPPKPTTGGDIAMDGS.

Belongs to the protein-tyrosine phosphatase family. As to quaternary structure, interacts with SKP1A/ASK1 and with MPK12. As to expression, expressed in root tips and vasculature, cotyledons, stems, leaves vasculature and hydathodes, flowers, siliques, and seeds.

Its subcellular location is the nucleus. The catalysed reaction is O-phospho-L-tyrosyl-[protein] + H2O = L-tyrosyl-[protein] + phosphate. Required for the transduction of auxin and abscisic acid (ABA) signaling pathways. Dephosphorylates and inactivates the MAP kinase MPK12. In Arabidopsis thaliana (Mouse-ear cress), this protein is Protein-tyrosine-phosphatase IBR5 (IBR5).